The primary structure comprises 287 residues: 4-hydroxybenzoate octaprenyltransferase (287 aa).

The next 9 membrane-spanning stretches (helical) occupy residues 21-41 (VGIFLLLWPTLWAVWIAAKGA), 44-64 (FKIAVIFIAGSVVMRAAGCIV), 91-111 (VTEAMLLFAVLSLIAFTLVLL), 112-132 (LNRLTVELAVIGILLALVYPF), 139-159 (LPQLWLGIAFSWSIPMAFAAT), 160-180 (VGHVPAVAWLLFFAAVLWPIV), 211-231 (LMIGLLQGSVLLTFGLLGWYL), 235-255 (YWFYLGLLVALGLMCYQQFLI), and 263-283 (CFAAFRNNNWVGFFIFLGILL).

This sequence belongs to the UbiA prenyltransferase family. It depends on Mg(2+) as a cofactor.

The protein resides in the cell inner membrane. The catalysed reaction is all-trans-octaprenyl diphosphate + 4-hydroxybenzoate = 4-hydroxy-3-(all-trans-octaprenyl)benzoate + diphosphate. It participates in cofactor biosynthesis; ubiquinone biosynthesis. Its function is as follows. Catalyzes the prenylation of para-hydroxybenzoate (PHB) with an all-trans polyprenyl group. Mediates the second step in the final reaction sequence of ubiquinone-8 (UQ-8) biosynthesis, which is the condensation of the polyisoprenoid side chain with PHB, generating the first membrane-bound Q intermediate 3-octaprenyl-4-hydroxybenzoate. This is 4-hydroxybenzoate octaprenyltransferase from Coxiella burnetii (strain CbuK_Q154) (Coxiella burnetii (strain Q154)).